Consider the following 347-residue polypeptide: Phosphoribosylformylglycinamidine cyclo-ligase (347 aa).

The protein belongs to the AIR synthase family.

The protein localises to the cytoplasm. It catalyses the reaction 2-formamido-N(1)-(5-O-phospho-beta-D-ribosyl)acetamidine + ATP = 5-amino-1-(5-phospho-beta-D-ribosyl)imidazole + ADP + phosphate + H(+). The protein operates within purine metabolism; IMP biosynthesis via de novo pathway; 5-amino-1-(5-phospho-D-ribosyl)imidazole from N(2)-formyl-N(1)-(5-phospho-D-ribosyl)glycinamide: step 2/2. The sequence is that of Phosphoribosylformylglycinamidine cyclo-ligase from Yersinia pseudotuberculosis serotype IB (strain PB1/+).